Reading from the N-terminus, the 144-residue chain is MRLNTLAPAAGSKHAPKRVGRGIGSGLGKTGGRGHKGQKSRSGGKVRPGFEGGQMPLKQRLPKFGFTSRKSLVSAEVRLAELAKVSGDVVDLNSLKAANIITKNIEFVKVVLSGEINKAVTVKGLRVTKGAKAAIEAAGGKIEE.

Positions 1–58 are disordered; it reads MRLNTLAPAAGSKHAPKRVGRGIGSGLGKTGGRGHKGQKSRSGGKVRPGFEGGQMPLK. Residues 21–31 are compositionally biased toward gly residues; it reads RGIGSGLGKTG. The segment covering 32 to 44 has biased composition (basic residues); that stretch reads GRGHKGQKSRSGG.

This sequence belongs to the universal ribosomal protein uL15 family. Part of the 50S ribosomal subunit.

Its function is as follows. Binds to the 23S rRNA. In Vibrio parahaemolyticus serotype O3:K6 (strain RIMD 2210633), this protein is Large ribosomal subunit protein uL15.